We begin with the raw amino-acid sequence, 221 residues long: Uracil-DNA glycosylase 1 (221 aa).

Catalysis depends on D61, which acts as the Proton acceptor.

It belongs to the uracil-DNA glycosylase (UDG) superfamily. UNG family.

It is found in the cytoplasm. It carries out the reaction Hydrolyzes single-stranded DNA or mismatched double-stranded DNA and polynucleotides, releasing free uracil.. In terms of biological role, excises uracil residues from the DNA which can arise as a result of misincorporation of dUMP residues by DNA polymerase or due to deamination of cytosine. This Listeria monocytogenes serovar 1/2a (strain ATCC BAA-679 / EGD-e) protein is Uracil-DNA glycosylase 1.